The primary structure comprises 360 residues: Peptide chain release factor 1 (360 aa).

Position 237 is an N5-methylglutamine (Gln237).

The protein belongs to the prokaryotic/mitochondrial release factor family. Methylated by PrmC. Methylation increases the termination efficiency of RF1.

Its subcellular location is the cytoplasm. In terms of biological role, peptide chain release factor 1 directs the termination of translation in response to the peptide chain termination codons UAG and UAA. The polypeptide is Peptide chain release factor 1 (Pseudomonas putida (strain W619)).